The chain runs to 380 residues: Succinyl-diaminopimelate desuccinylase (380 aa).

A Zn(2+)-binding site is contributed by histidine 69. The active site involves aspartate 71. Aspartate 102 lines the Zn(2+) pocket. Glutamate 136 serves as the catalytic Proton acceptor. Residues glutamate 137, glutamate 165, and histidine 351 each coordinate Zn(2+).

Belongs to the peptidase M20A family. DapE subfamily. In terms of assembly, homodimer. Zn(2+) serves as cofactor. It depends on Co(2+) as a cofactor.

It catalyses the reaction N-succinyl-(2S,6S)-2,6-diaminopimelate + H2O = (2S,6S)-2,6-diaminopimelate + succinate. It participates in amino-acid biosynthesis; L-lysine biosynthesis via DAP pathway; LL-2,6-diaminopimelate from (S)-tetrahydrodipicolinate (succinylase route): step 3/3. In terms of biological role, catalyzes the hydrolysis of N-succinyl-L,L-diaminopimelic acid (SDAP), forming succinate and LL-2,6-diaminopimelate (DAP), an intermediate involved in the bacterial biosynthesis of lysine and meso-diaminopimelic acid, an essential component of bacterial cell walls. This is Succinyl-diaminopimelate desuccinylase from Bordetella petrii (strain ATCC BAA-461 / DSM 12804 / CCUG 43448).